A 115-amino-acid chain; its full sequence is MTTSFYFLLVALGLLLYVCQSSFGNQHTRNSDTPWNRCGSQITDSYRELCPHKRNDAGKKRGQASPLWQRGGSLSMLKARAKRNEAFHLQRAHRGVVEHCCKRACSNAEFMQFCG.

The first 21 residues, 1–21 (MTTSFYFLLVALGLLLYVCQS), serve as a signal peptide directing secretion. Positions 22-29 (SFGNQHTR) are excised as a propeptide. Disulfide bonds link cysteine 38–cysteine 101, cysteine 50–cysteine 114, and cysteine 100–cysteine 105. At glutamate 48 the chain carries 4-carboxyglutamate. Residues 53–94 (KRNDAGKKRGQASPLWQRGGSLSMLKARAKRNEAFHLQRAHR) constitute a propeptide, c peptide. Residue glutamate 98 is modified to 4-carboxyglutamate. Glutamate 109 carries the post-translational modification 4-carboxyglutamate. Cysteine amide is present on cysteine 114.

Belongs to the insulin family. Heterodimer of A and B chains; disulfide-linked. Expressed by the venom gland.

It is found in the secreted. Its function is as follows. This venom insulin facilitates prey capture by rapidly inducing hypoglycemic shock. It is one of the smallest known insulin found in nature and lacks the C-terminal segment of the B chain that, in human insulin, mediates engagement of the insulin receptor (INSR) and assembly of the hormone's hexameric storage form. Despite lacking this segment, it both binds and activates human insulin receptor (long isoform (HIR-B)) with a high potency (EC(50)=15.5 nM). In vivo, intraperitoneal injection of this peptide into zebrafish lowers blood glucose with a lower potency than human insulin. In addition, when applied to water, this peptide reduces overall locomotor activity of zebrafish larvae, observed as a significant decrease in the percentage of time spent swimming and movement frequency. When tested on a mouse model of diabetes, this insulin also lowers blood glucose with a 10-fold lower potency than human insulin. This is Con-Ins T2 from Conus tulipa (Fish-hunting cone snail).